Here is a 363-residue protein sequence, read N- to C-terminus: Mannose-1-phosphate guanyltransferase (363 aa).

The protein belongs to the transferase hexapeptide repeat family.

It is found in the cytoplasm. The enzyme catalyses alpha-D-mannose 1-phosphate + GTP + H(+) = GDP-alpha-D-mannose + diphosphate. The protein operates within nucleotide-sugar biosynthesis; GDP-alpha-D-mannose biosynthesis; GDP-alpha-D-mannose from alpha-D-mannose 1-phosphate (GTP route): step 1/1. Involved in cell wall synthesis where it is required for glycosylation. Involved in cell cycle progression through cell-size checkpoint. Required for the correct assembly of the septum. The chain is Mannose-1-phosphate guanyltransferase (mpg1) from Schizosaccharomyces pombe (strain 972 / ATCC 24843) (Fission yeast).